The primary structure comprises 332 residues: Polyprenyl transferase yanG (332 aa).

8 consecutive transmembrane segments (helical) span residues Ile42–Ala62, Val72–Val92, Pro145–Lys165, Phe170–Val190, Ala200–Thr220, Val242–Leu262, Leu266–Val286, and Val300–Val320.

It belongs to the UbiA prenyltransferase family. Mg(2+) is required as a cofactor.

The protein localises to the membrane. It participates in secondary metabolite biosynthesis; terpenoid biosynthesis. Functionally, polyprenyl transferase; part of the gene cluster that mediates the biosynthesis of yanuthone D, a fungal isoprenoid epoxycyclohexenone that acts as an antibiotic against fungi and bacteria. The first step of the pathway is the synthesis of 6-methylsalicylic acid (6-MSA) by the polyketide synthase yanA. 6-MSA is then converted to m-cresol by the decarboxylase yanB. The cytochrome P450 monooxygenase yanC then catalyzes the oxidation of m-cresol to toluquinol. Epoxidation of toluquinol is then performed by the short chain dehydrogenase yanD, with the help of yanE, and a further prenylation by yanG leads to 7-deacetoxyyanuthone A. The next step is the hydroxylation of C-22 of 7-deacetoxyyanuthone A by the cytochrome P450 monooxygenase yanH to yield 22-deacetylyanuthone A. O-Mevalon transferase yanI then attaches mevalon to the hydroxyl group of 22-deacetylyanuthone A to produce yanuthone E. Finally, the FAD-dependent monooxygenase yanF oxidizes the hydroxyl group at C15 of yanuthone E to form yanuthone D. Furthermore, several branching points in the pathway lead to the production of yanuthones F and G from 7-deacetoxyyanuthone A; yanuthones H and I from 22-deacetylyanuthone A; and yanuthone J from yanuthone E. YanG is also involved in the synthesis of yanuthone X1 which does not have 6-methylsalicylic acid (6-MSA) as precursor. This chain is Polyprenyl transferase yanG, found in Aspergillus niger (strain ATCC 1015 / CBS 113.46 / FGSC A1144 / LSHB Ac4 / NCTC 3858a / NRRL 328 / USDA 3528.7).